A 525-amino-acid chain; its full sequence is AP-4 complex accessory subunit Tepsin (525 aa).

The ENTH domain maps to 8 to 141; sequence RDRLSFLHRL…FSDTVLPLAP (134 aa). A disordered region spans residues 139 to 229; that stretch reads LAPSQPLGTP…SHSGASREPG (91 aa). Over residues 193–225 the composition is skewed to low complexity; that stretch reads SGPSSQNSSQNSDLSRVSDSGSHSGSDSHSGAS. Residues S333 and S356 each carry the phosphoserine modification. The disordered stretch occupies residues 355 to 465; sequence LSPARGTSAE…PKRGPSSCAW (111 aa). Over residues 393–412 the composition is skewed to low complexity; the sequence is PLSSTPVSSRSPAPSSGMPS. Residues 413–429 are compositionally biased toward pro residues; the sequence is SPVPTPPPDASPIPAPG. Residues 434–448 are compositionally biased toward basic and acidic residues; it reads AEARLAESRRWRPER. The interaction with AP4B1 stretch occupies residues 467–477; the sequence is RDSLFAGMELV. Positions 487–525 are disordered; that stretch reads AAAGESCPDAPRAPQTSSQRTAAKEPPGSEPSAFAFLNA. The segment at 515–525 is interaction with AP4E1; it reads SEPSAFAFLNA.

Interacts with AP4B1 and AP4E1; the interaction is direct and mediates the association of TEPSIN with the adapter-like complex 4 (AP-4), a heterotetramer composed of AP4B1, AP4E1, AP4M1 and AP4S1.

It localises to the golgi apparatus. It is found in the trans-Golgi network membrane. The protein resides in the cytoplasmic vesicle. The protein localises to the cytoplasm. Its subcellular location is the cytosol. Associates with the adapter-like complex 4 (AP-4) and may therefore play a role in vesicular trafficking of proteins at the trans-Golgi network. In Homo sapiens (Human), this protein is AP-4 complex accessory subunit Tepsin.